A 232-amino-acid polypeptide reads, in one-letter code: Phosphoribosylformylglycinamidine synthase subunit PurQ (232 aa).

Residues 2 to 232 enclose the Glutamine amidotransferase type-1 domain; the sequence is KIAILQFGGT…SMVDYITENF (231 aa). Catalysis depends on cysteine 86, which acts as the Nucleophile. Active-site residues include histidine 203 and glutamate 205.

In terms of assembly, part of the FGAM synthase complex composed of 1 PurL, 1 PurQ and 2 PurS subunits.

The protein localises to the cytoplasm. The catalysed reaction is N(2)-formyl-N(1)-(5-phospho-beta-D-ribosyl)glycinamide + L-glutamine + ATP + H2O = 2-formamido-N(1)-(5-O-phospho-beta-D-ribosyl)acetamidine + L-glutamate + ADP + phosphate + H(+). It catalyses the reaction L-glutamine + H2O = L-glutamate + NH4(+). Its pathway is purine metabolism; IMP biosynthesis via de novo pathway; 5-amino-1-(5-phospho-D-ribosyl)imidazole from N(2)-formyl-N(1)-(5-phospho-D-ribosyl)glycinamide: step 1/2. In terms of biological role, part of the phosphoribosylformylglycinamidine synthase complex involved in the purines biosynthetic pathway. Catalyzes the ATP-dependent conversion of formylglycinamide ribonucleotide (FGAR) and glutamine to yield formylglycinamidine ribonucleotide (FGAM) and glutamate. The FGAM synthase complex is composed of three subunits. PurQ produces an ammonia molecule by converting glutamine to glutamate. PurL transfers the ammonia molecule to FGAR to form FGAM in an ATP-dependent manner. PurS interacts with PurQ and PurL and is thought to assist in the transfer of the ammonia molecule from PurQ to PurL. This Methanosarcina barkeri (strain Fusaro / DSM 804) protein is Phosphoribosylformylglycinamidine synthase subunit PurQ.